A 1368-amino-acid chain; its full sequence is DNA-directed RNA polymerase subunit beta (1368 aa).

This sequence belongs to the RNA polymerase beta chain family. As to quaternary structure, the RNAP catalytic core consists of 2 alpha, 1 beta, 1 beta' and 1 omega subunit. When a sigma factor is associated with the core the holoenzyme is formed, which can initiate transcription.

It catalyses the reaction RNA(n) + a ribonucleoside 5'-triphosphate = RNA(n+1) + diphosphate. In terms of biological role, DNA-dependent RNA polymerase catalyzes the transcription of DNA into RNA using the four ribonucleoside triphosphates as substrates. This Burkholderia multivorans (strain ATCC 17616 / 249) protein is DNA-directed RNA polymerase subunit beta.